The primary structure comprises 241 residues: Sec-independent protein translocase protein TatC (241 aa).

The next 6 membrane-spanning stretches (helical) occupy residues 27 to 47 (LIIV…FSAG), 76 to 96 (LTMC…YEAF), 122 to 142 (FVAG…SIVI), 161 to 181 (IVTN…IIVL), 193 to 213 (LVKG…FFSP), and 217 to 237 (LFSQ…SMVL).

The protein belongs to the TatC family. Forms a complex with TatA.

The protein resides in the cell membrane. Its function is as follows. Part of the twin-arginine translocation (Tat) system that transports large folded proteins containing a characteristic twin-arginine motif in their signal peptide across membranes. In Methanocella arvoryzae (strain DSM 22066 / NBRC 105507 / MRE50), this protein is Sec-independent protein translocase protein TatC.